Consider the following 142-residue polypeptide: Mitochondrial import receptor subunit TOM22 homolog (142 aa).

The segment covering 1–11 (MAAAVAAAGAG) has biased composition (low complexity). Residues 1–42 (MAAAVAAAGAGEPQSPDELLPKGDAEKPEEELEEDDDEELDE) are disordered. The residue at position 2 (alanine 2) is an N-acetylalanine. Topologically, residues 2–83 (AAAVAAAGAG…AQKMYRFSRA (82 aa)) are cytoplasmic. Serine 15 is subject to Phosphoserine. Residues 27-42 (KPEEELEEDDDEELDE) show a composition bias toward acidic residues. The import sequence; necessary for mitochondrion outer membrane localization and integration in the TOM complex stretch occupies residues 41-50 (DETLSERLWG). Phosphothreonine is present on threonine 43. Phosphoserine is present on serine 45. The tract at residues 83-103 (AALWIGTTSFMILVLPVVFET) is TMD; necessary for mitochondrion outer membrane localization and integration in the TOM complex. The helical transmembrane segment at 84 to 103 (ALWIGTTSFMILVLPVVFET) threads the bilayer. Topologically, residues 104–142 (EKLQMEQQQQLQQRQILLGPNTGLSGGMPGALPSLPGKI) are mitochondrial intermembrane. A C-tail signal; necessary for mitochondrion outer membrane localization and integration in the TOM complex region spans residues 123-142 (PNTGLSGGMPGALPSLPGKI).

Belongs to the Tom22 family. In terms of assembly, forms part of the preprotein translocase complex of the outer mitochondrial membrane (TOM complex) which consists of at least 7 different proteins (TOMM5, TOMM6, TOMM7, TOMM20, TOMM22, TOMM40 and TOMM70). Interacts with TOMM40. Interacts with PPP2R2B. Ubiquitous.

Its subcellular location is the mitochondrion outer membrane. Its function is as follows. Central receptor component of the translocase of the outer membrane of mitochondria (TOM complex) responsible for the recognition and translocation of cytosolically synthesized mitochondrial preproteins. Together with the peripheral receptor TOM20 functions as the transit peptide receptor and facilitates the movement of preproteins into the translocation pore. Required for the translocation across the mitochondrial outer membrane of cytochrome P450 monooxygenases. This is Mitochondrial import receptor subunit TOM22 homolog (TOMM22) from Homo sapiens (Human).